Reading from the N-terminus, the 247-residue chain is Exosome complex component Rrp4 (247 aa).

One can recognise an S1 motif domain in the interval 70-143; sequence GDTVIGLIED…INPILSIKGK (74 aa). A KH domain is found at 149 to 211; the sequence is SSGIVIDIPP…EALVEAIQII (63 aa).

It belongs to the RRP4 family. In terms of assembly, component of the archaeal exosome complex. Forms a trimer of Rrp4 and/or Csl4 subunits. The trimer associates with a hexameric ring-like arrangement composed of 3 Rrp41-Rrp42 heterodimers.

It is found in the cytoplasm. Its function is as follows. Non-catalytic component of the exosome, which is a complex involved in RNA degradation. Increases the RNA binding and the efficiency of RNA degradation. Confers strong poly(A) specificity to the exosome. The polypeptide is Exosome complex component Rrp4 (Sulfurisphaera tokodaii (strain DSM 16993 / JCM 10545 / NBRC 100140 / 7) (Sulfolobus tokodaii)).